Here is a 150-residue protein sequence, read N- to C-terminus: Large ribosomal subunit protein bL9 (150 aa).

It belongs to the bacterial ribosomal protein bL9 family.

Binds to the 23S rRNA. This chain is Large ribosomal subunit protein bL9, found in Neisseria meningitidis serogroup B (strain ATCC BAA-335 / MC58).